The following is a 70-amino-acid chain: Cold shock-like protein (70 aa).

The CSD domain maps to 5-65 (GTVKWFSKDK…DTKGPRAKNV (61 aa)).

The protein localises to the cytoplasm. This chain is Cold shock-like protein (csp), found in Aquifex aeolicus (strain VF5).